We begin with the raw amino-acid sequence, 299 residues long: ATP phosphoribosyltransferase (299 aa).

This sequence belongs to the ATP phosphoribosyltransferase family. Long subfamily. The cofactor is Mg(2+).

It localises to the cytoplasm. It carries out the reaction 1-(5-phospho-beta-D-ribosyl)-ATP + diphosphate = 5-phospho-alpha-D-ribose 1-diphosphate + ATP. It participates in amino-acid biosynthesis; L-histidine biosynthesis; L-histidine from 5-phospho-alpha-D-ribose 1-diphosphate: step 1/9. With respect to regulation, feedback inhibited by histidine. Catalyzes the condensation of ATP and 5-phosphoribose 1-diphosphate to form N'-(5'-phosphoribosyl)-ATP (PR-ATP). Has a crucial role in the pathway because the rate of histidine biosynthesis seems to be controlled primarily by regulation of HisG enzymatic activity. This chain is ATP phosphoribosyltransferase, found in Shewanella woodyi (strain ATCC 51908 / MS32).